We begin with the raw amino-acid sequence, 868 residues long: V-set and immunoglobulin domain-containing protein 10-like (868 aa).

Residues 1-27 form the signal peptide; the sequence is MGLSWALLPFLLLAFRAELLALQPALG. Positions 26–52 are enriched in low complexity; it reads LGSQPPSASSSHSMGSSRDFVSNVSSS. Positions 26-82 are disordered; it reads LGSQPPSASSSHSMGSSRDFVSNVSSSQHPQPPGSEASAGIPDSNRFPQGLNSSHVP. Over 28 to 763 the chain is Extracellular; it reads SQPPSASSSH…QAGSDLSPGA (736 aa). N-linked (GlcNAc...) asparagine glycans are attached at residues asparagine 48, asparagine 77, and asparagine 88. Over residues 71-80 the composition is skewed to polar residues; that stretch reads RFPQGLNSSH. Disordered stretches follow at residues 96–154 and 323–342; these read LSPD…SGSK and WSRDGRALGTSDPEGAEPPR. 2 stretches are compositionally biased toward polar residues: residues 99–108 and 133–143; these read DVTSSETPPS and PASQISVQTPD. Ig-like C2-type domains follow at residues 289-381 and 389-474; these read PQLS…ADVS and PVIR…SVFN. Residues cysteine 311 and cysteine 365 are joined by a disulfide bond. An N-linked (GlcNAc...) asparagine glycan is attached at asparagine 410. Cysteines 415 and 458 form a disulfide. Residues asparagine 474, asparagine 628, and asparagine 637 are each glycosylated (N-linked (GlcNAc...) asparagine). The helical transmembrane segment at 764-784 threads the bilayer; the sequence is IAGIVLGSLLGLALLAGLLIL. Topologically, residues 785 to 868 are cytoplasmic; that stretch reads CICCLRRYPG…PWTVRAATQV (84 aa).

The protein localises to the membrane. This is V-set and immunoglobulin domain-containing protein 10-like (Vsig10l) from Mus musculus (Mouse).